The primary structure comprises 773 residues: MKMRGEKRRDKVNPKSSQRKLNWIPSFPTYDYFNQVTLQLLDGFMITLSTDGVIICVAENISSLLGHLPAEIVGKKLLSLLPDEEKDEVYQKIILKFPLLNSETHIEFCCHLKRGNVEHGDSSAYENVKFIVNVRDICNEFPVVFSGLFSSHLCADFAACVPQEDRLYLVGNVCILRTQLLQQLYTSKAVSDEAVLTQDSDEEPFVGELSSSQGQRGHTSMKAVYVEPAAAAAAAAISDDQIDIAEVEQYGPQENVHMFVDSDSTYCSSTVFLDTMPESPALSLQDFRGEPEVNPLYRADPVDLEFSVDQVDSVDQEGPMDQQDPENPVAPLDQAGLMDPVDPEDSVDLGAAGASAQPLQPSSPVAYDIISQELELMKKLKEQLEERTWLLHDAIQNQQNALELMMDHLQKQPNTLRHVVIPDLQSSEAVPKKQQKQHAGQVKRPLPHPKDVKCFCGLSLSNSLKNTGELQEPCVAFNQQQLVQQEQHLKEQQRQLREQLQQLREQRKVQKQKKMQEKKKLQEQKMQEKKKLQEQRRQKKKKLQERKKWQGQMLQKEPEEEQQKQQLQEQPLKHNVIVGNERVQICLQNPRDVSVPLCNHPVRFLQAQPIVPVQRAAEQQPSGFYQDENCGQQEDESQSFYPEAYQGPPVNQLPLIDTSNSEAISSSSIPQFPITSDSTISTLETPQDYIRLWQELSDSLGPVVQVNTWSCDEQGTLHGQPTYHQVQVSEVGVEGPPDPQAFQGPAAYQPDQMRSAEQTRLMPAEQRDSNKPC.

The PAS domain occupies 30–102 (YDYFNQVTLQ…IILKFPLLNS (73 aa)). The interval 313–361 (SVDQEGPMDQQDPENPVAPLDQAGLMDPVDPEDSVDLGAAGASAQPLQP) is disordered. The tract at residues 365-412 (VAYDIISQELELMKKLKEQLEERTWLLHDAIQNQQNALELMMDHLQKQ) is necessary for transcriptional repression. Positions 365–412 (VAYDIISQELELMKKLKEQLEERTWLLHDAIQNQQNALELMMDHLQKQ) form a coiled coil. Disordered regions lie at residues 427–448 (SEAV…PLPH), 506–569 (QRKV…QLQE), and 732–773 (GVEG…NKPC). Residues 475 to 553 (VAFNQQQLVQ…QERKKWQGQM (79 aa)) adopt a coiled-coil conformation. Residues 506–536 (QRKVQKQKKMQEKKKLQEQKMQEKKKLQEQR) are compositionally biased toward basic and acidic residues.

In terms of assembly, interacts with the CLOCK-BMAL1 heterodimer; this interaction inhibits CLOCK-BMAL1 transcriptional activation and suppress circadian timekeeping. Interacts with BMAL1. As to expression, testis-specific. Expressed in a broad range of cancer cells, including melanoma, lung cancer, and breast cancer (at protein level). Testis-specific. Found in histologically normal tissues from patients with uterus, lung and small intestine cancers. Widespread expression seen in solid tumors and diffuse large B-cell lymphoma (DLBCL)-derived cell lines. Isoform 2 is expressed in all DLBCL-derived cell lines, while isoform 1 is preferentially expressed in cell lines derived from non-germinal center DLBCL.

The protein resides in the nucleus. Its function is as follows. Functions as a suppressor of the biological clock that drives the daily circadian rhythms of cells throughout the body. Acts as a nuclear repressor of the CLOCK-BMAL1 heterodimer-mediated transcriptional activation of the core clock components. Inhibits circadian clock function in cancer cells, when overexpressed. The sequence is that of Circadian clock protein PASD1 from Homo sapiens (Human).